An 80-amino-acid chain; its full sequence is Conotoxin SIVB (80 aa).

The signal sequence occupies residues 1–21; it reads MGMRMMFTVFLSVVLATTVVS. Residues 22–38 constitute a propeptide that is removed on maturation; it reads TPSDRASDGRNAAVHER. Gln-39 carries the pyrrolidone carboxylic acid modification. Ser-45 carries O-linked (HexNAc...) serine glycosylation. Pro-55, Pro-60, Pro-61, Pro-69, Pro-72, and Pro-75 each carry 4-hydroxyproline. Proline amide is present on Pro-75. Residues 76 to 80 constitute a propeptide that is removed on maturation; that stretch reads GRRND.

This sequence belongs to the conotoxin A superfamily. In terms of processing, contains 3 disulfide bonds. O-linked glycan consists of Hex3-HexNAc2 pentasaccharide. Expressed by the venom duct.

The protein resides in the secreted. Its function is as follows. Neurotoxin with probable activity on sodium channel. Induces intense repetitive firing of the frog neuromuscular junction, leading to a tetanic contracture in muscle fiber (spastic paralysis). In vivo, shows the same effect as the whole venom when injected on fish prey. In Conus striatus (Striated cone), this protein is Conotoxin SIVB.